Reading from the N-terminus, the 453-residue chain is Ribosome biogenesis protein SSF1 (453 aa).

The span at 1–11 (MAKRRQKKRTH) shows a compositional bias: basic residues. Disordered stretches follow at residues 1-22 (MAKR…EQGI), 275-324 (KAKH…PRKK), and 374-453 (KMRL…SEVE). Residues 26 to 348 (MVIRVGQTSL…LVKIEEGICS (323 aa)) form the Brix domain. The segment covering 288–300 (PVEKKDNKEREKE) has biased composition (basic and acidic residues). Phosphothreonine is present on Thr301. Basic and acidic residues predominate over residues 374–398 (KMRLKEQRKKEQEENIAKKKAVKDA). Basic residues predominate over residues 399–409 (KKQRKLERRKA). A compositionally biased stretch (basic and acidic residues) spans 410 to 423 (RAAEGGEGQGKDDA). The span at 442–453 (EDLDSDLFSEVE) shows a compositional bias: acidic residues.

In terms of assembly, part of a complex that includes BRX1, RPF1, RPF2 and SSF1 or SSF2.

The protein localises to the nucleus. The protein resides in the nucleolus. In terms of biological role, required for biogenesis of the 60S ribosomal subunit. This chain is Ribosome biogenesis protein SSF1 (SSF1), found in Saccharomyces cerevisiae (strain ATCC 204508 / S288c) (Baker's yeast).